Consider the following 248-residue polypeptide: Trypsin I-P1 (248 aa).

Positions 1–15 are cleaved as a signal peptide; it reads MKFLVLVAFVGVTVA. A propeptide spans 16–25 (activation peptide); sequence FPISDEDDDK. A Peptidase S1 domain is found at 26–246; sequence IVGGYSCARS…YVSWIKTTMS (221 aa). Disulfide bonds link C32–C162, C50–C66, C134–C235, C141–C208, C173–C187, and C198–C222. H65 serves as the catalytic Charge relay system. Ca(2+) is bound by residues E77, N79, and E87. Residue D109 is the Charge relay system of the active site. The active-site Charge relay system is the S202.

It belongs to the peptidase S1 family. The cofactor is Ca(2+). High levels are seen in the pancreas while lower levels are found in the liver, spleen and thymus.

It is found in the secreted. The protein resides in the extracellular space. The enzyme catalyses Preferential cleavage: Arg-|-Xaa, Lys-|-Xaa.. This is Trypsin I-P1 from Gallus gallus (Chicken).